The sequence spans 316 residues: Bifunctional riboflavin kinase/FMN adenylyltransferase (316 aa).

This sequence belongs to the RibF family.

The enzyme catalyses riboflavin + ATP = FMN + ADP + H(+). It catalyses the reaction FMN + ATP + H(+) = FAD + diphosphate. It participates in cofactor biosynthesis; FAD biosynthesis; FAD from FMN: step 1/1. The protein operates within cofactor biosynthesis; FMN biosynthesis; FMN from riboflavin (ATP route): step 1/1. Its function is as follows. Catalyzes the phosphorylation of riboflavin to FMN followed by the adenylation of FMN to FAD. This is Bifunctional riboflavin kinase/FMN adenylyltransferase (ribC) from Bacillus subtilis (strain 168).